A 132-amino-acid polypeptide reads, in one-letter code: Large ribosomal subunit protein uL14 (132 aa).

The protein belongs to the universal ribosomal protein uL14 family. Part of the 50S ribosomal subunit. Forms a cluster with proteins L3 and L24e, part of which may contact the 16S rRNA in 2 intersubunit bridges.

Functionally, binds to 23S rRNA. Forms part of two intersubunit bridges in the 70S ribosome. The sequence is that of Large ribosomal subunit protein uL14 from Methanothrix thermoacetophila (strain DSM 6194 / JCM 14653 / NBRC 101360 / PT) (Methanosaeta thermophila).